Consider the following 1233-residue polypeptide: DNA-directed RNA polymerase subunit beta' (1233 aa).

C61, C63, C76, and C79 together coordinate Zn(2+). Mg(2+)-binding residues include D455, D457, and D459. Zn(2+) is bound by residues C824, C898, C905, and C908. Residues 1211-1220 (ELQKAFDKEP) are compositionally biased toward basic and acidic residues. Residues 1211 to 1233 (ELQKAFDKEPASSTGNKASNSAK) form a disordered region. A compositionally biased stretch (polar residues) spans 1221 to 1233 (ASSTGNKASNSAK).

Belongs to the RNA polymerase beta' chain family. The RNAP catalytic core consists of 2 alpha, 1 beta, 1 beta' and 1 omega subunit. When a sigma factor is associated with the core the holoenzyme is formed, which can initiate transcription. The cofactor is Mg(2+). It depends on Zn(2+) as a cofactor.

It carries out the reaction RNA(n) + a ribonucleoside 5'-triphosphate = RNA(n+1) + diphosphate. In terms of biological role, DNA-dependent RNA polymerase catalyzes the transcription of DNA into RNA using the four ribonucleoside triphosphates as substrates. This is DNA-directed RNA polymerase subunit beta' from Oenococcus oeni (strain ATCC BAA-331 / PSU-1).